Here is a 153-residue protein sequence, read N- to C-terminus: NADPH-dependent 7-cyano-7-deazaguanine reductase (153 aa).

The disordered stretch occupies residues 1 to 22 (MTDNRYDNLGQLGTSTPLPDNP). The active-site Thioimide intermediate is Cys51. Asp58 (proton donor) is an active-site residue. Residues 73 to 75 (VES) and 92 to 93 (HE) contribute to the substrate site.

The protein belongs to the GTP cyclohydrolase I family. QueF type 1 subfamily.

The protein localises to the cytoplasm. The catalysed reaction is 7-aminomethyl-7-carbaguanine + 2 NADP(+) = 7-cyano-7-deazaguanine + 2 NADPH + 3 H(+). It participates in tRNA modification; tRNA-queuosine biosynthesis. Catalyzes the NADPH-dependent reduction of 7-cyano-7-deazaguanine (preQ0) to 7-aminomethyl-7-deazaguanine (preQ1). In Maricaulis maris (strain MCS10) (Caulobacter maris), this protein is NADPH-dependent 7-cyano-7-deazaguanine reductase.